Consider the following 262-residue polypeptide: Ribosomal RNA small subunit methyltransferase A (262 aa).

The S-adenosyl-L-methionine site is built by His11, Ile13, Gly38, Glu60, Asp85, and Asn105.

This sequence belongs to the class I-like SAM-binding methyltransferase superfamily. rRNA adenine N(6)-methyltransferase family. RsmA subfamily.

The protein localises to the cytoplasm. It carries out the reaction adenosine(1518)/adenosine(1519) in 16S rRNA + 4 S-adenosyl-L-methionine = N(6)-dimethyladenosine(1518)/N(6)-dimethyladenosine(1519) in 16S rRNA + 4 S-adenosyl-L-homocysteine + 4 H(+). Its function is as follows. Specifically dimethylates two adjacent adenosines (A1518 and A1519) in the loop of a conserved hairpin near the 3'-end of 16S rRNA in the 30S particle. May play a critical role in biogenesis of 30S subunits. This chain is Ribosomal RNA small subunit methyltransferase A, found in Neorickettsia sennetsu (strain ATCC VR-367 / Miyayama) (Ehrlichia sennetsu).